The chain runs to 447 residues: Phosphoglucosamine mutase (447 aa).

The active-site Phosphoserine intermediate is the S107. Residues S107, D246, D248, and D250 each coordinate Mg(2+). S107 bears the Phosphoserine mark.

It belongs to the phosphohexose mutase family. Mg(2+) serves as cofactor. In terms of processing, activated by phosphorylation.

The catalysed reaction is alpha-D-glucosamine 1-phosphate = D-glucosamine 6-phosphate. Functionally, catalyzes the conversion of glucosamine-6-phosphate to glucosamine-1-phosphate. The protein is Phosphoglucosamine mutase of Ralstonia nicotianae (strain ATCC BAA-1114 / GMI1000) (Ralstonia solanacearum).